Consider the following 1142-residue polypeptide: Protein lin-25 (1142 aa).

The span at 600–613 (IEEEIEEEEEDIEP) shows a compositional bias: acidic residues. The disordered stretch occupies residues 600–706 (IEEEIEEEEE…EKPKEPLEPT (107 aa)). Basic and acidic residues-rich tracts occupy residues 614-627 (EVVK…TEKE), 652-662 (DEQKTEEKMDT), and 679-703 (DPPK…KEPL).

Its subcellular location is the nucleus. It is found in the cytoplasm. Its function is as follows. Participates in the inductive signaling pathway downstream of let-60 Ras and the RAF/MAP kinase cascade to regulate specification and differentiation of many cell types. Positively regulates the fate of vulval precursor cells. Required for induction of the P12 and excretory duct cell fates. In males, it is also required for proper formation of spicules. Does not function in the signaling pathway that promotes exit from pachytene. This chain is Protein lin-25, found in Caenorhabditis briggsae.